Consider the following 326-residue polypeptide: uncharacterized protein (326 aa).

Solcar repeat units follow at residues 20–107 (QDSN…CKKK), 120–219 (LTNT…LREF), and 231–322 (KSNL…VCDS). The next 6 membrane-spanning stretches (helical) occupy residues 24–40 (IAFL…RTVV), 84–104 (GLNC…YEAC), 126–143 (LFSG…TYPL), 195–213 (VWPT…FAVY), 237–254 (LTIG…TYPF), and 297–316 (GLAA…WLVY).

Belongs to the mitochondrial carrier (TC 2.A.29) family.

Its subcellular location is the mitochondrion inner membrane. This is an uncharacterized protein from Saccharomyces cerevisiae (strain ATCC 204508 / S288c) (Baker's yeast).